Reading from the N-terminus, the 370-residue chain is DNA-directed RNA polymerase II subunit GRINL1A (370 aa).

Positions 1 to 20 (MSSLPRGFEPQTPEDLGQRS) are disordered. Residues 15–69 (DLGQRSLAELREMLKRQERLLRNVKFICKLPDKGKKISDAVTKLKAAIAEREEVR) are a coiled coil. Residues 29 to 68 (KRQERLLRNVKFICKLPDKGKKISDAVTKLKAAIAEREEV) are important for transcription repressor activity. 3 disordered regions span residues 93–172 (DGDR…ASEG), 204–226 (DPTE…WSGP), and 241–283 (KNPM…RRDR). Polar residues predominate over residues 101–131 (NSDQILDTSSPVPGCSSVANITSSQTTSRQQ). A compositionally biased stretch (basic and acidic residues) spans 138–152 (RGGDAEAAEAEHTVS). Residues 155 to 170 (PTSSSGAPAPSSSQAS) show a composition bias toward low complexity. Positions 205 to 214 (PTEHHSEGNR) are enriched in basic and acidic residues. Residues 228–299 (KKPHYMEVLE…TAARLLPLHH (72 aa)) form an interaction with Pol II region. The span at 254 to 266 (VLPSQPRDSSSAC) shows a compositional bias: polar residues. At Ser271 the chain carries Phosphoserine. The important for transcription repressor activity stretch occupies residues 300–315 (LPTQLLSIEESLALQR). Residues 303–328 (QLLSIEESLALQRQQKQSYEEIQAKL) adopt a coiled-coil conformation. Residues 316 to 341 (QQKQSYEEIQAKLAAQKLAERLNIKM) are interaction with Pol II. The interval 340-370 (KMQSYNPEGESSRKYREVRDEDDDQSSEDEF) is disordered. Over residues 349–358 (ESSRKYREVR) the composition is skewed to basic and acidic residues. Acidic residues predominate over residues 359 to 370 (DEDDDQSSEDEF).

This sequence belongs to the GRINL1 family. As to quaternary structure, component of the Pol II(G) complex, which contains the RNA polymerase II (Pol II) core complex subunits and POLR2M and appears to be an abundant form of Pol II. Dephosphorylated at Ser-271 by the PNUTS-PP1 complex, promoting RNA polymerase II transcription pause-release.

The protein localises to the nucleus. In terms of biological role, appears to be a stable component of the Pol II(G) complex form of RNA polymerase II (Pol II). Pol II synthesizes mRNA precursors and many functional non-coding RNAs and is the central component of the basal RNA polymerase II transcription machinery. May play a role in Mediator complex-dependent regulation of transcription activation. Acts in vitro as a negative regulator of transcriptional activation; this repression is relieved by the Mediator complex, which restores Pol II(G) activator-dependent transcription to a level equivalent to that of Pol II. The polypeptide is DNA-directed RNA polymerase II subunit GRINL1A (POLR2M) (Bos taurus (Bovine)).